A 689-amino-acid chain; its full sequence is E3 ubiquitin-protein ligase RNF169 (689 aa).

The RING-type zinc-finger motif lies at 49–88 (CAGCLETPGEAAALPCGHSLCRGCAQRAADAAGPCCPRCR). Disordered stretches follow at residues 95-148 (ARRR…PAEP) and 178-238 (KLQE…PSRG). 2 stretches are compositionally biased toward basic and acidic residues: residues 110–128 (LGERARRGPPERCRPRRDG) and 178–224 (KLQE…EHCP). Positions 186–194 (EDQIHKLLP) match the UMI motif motif. Residues Ser-228 and Ser-230 each carry the phosphoserine modification. Lys-267 is covalently cross-linked (Glycyl lysine isopeptide (Lys-Gly) (interchain with G-Cter in SUMO2)). Polar residues predominate over residues 268–277 (MERSQSCSDT). The disordered stretch occupies residues 268–299 (MERSQSCSDTGQDRAKSRLRAAPTSKAKATAM). Phosphoserine is present on Ser-320. A Glycyl lysine isopeptide (Lys-Gly) (interchain with G-Cter in SUMO2) cross-link involves residue Lys-343. A phosphoserine mark is found at Ser-384 and Ser-390. Phosphothreonine is present on Thr-391. Ser-466 is modified (phosphoserine). The interval 489–542 (SQTKAEQGSDRKKNTEIPLETCCSSELPVGASGTSLEREQSERSGSSPDAKLDK) is disordered. Residue Lys-492 forms a Glycyl lysine isopeptide (Lys-Gly) (interchain with G-Cter in SUMO2) linkage. At Ser-625 the chain carries Phosphoserine. The MIU motif motif lies at 646–663 (QEEEDRQLALQLQRMFDN). The short motif at 670–682 (RRKGSVDQYLLRS) is the LR motif element. Ser-674 carries the phosphoserine modification.

This sequence belongs to the RNF169 family. Interacts with DYRK1B. Post-translationally, phosphorylated by DYRK1A; phosphorylation increases RNF169 ability to block accumulation of TP53BP1 at the DSB sites.

The protein resides in the chromosome. It is found in the nucleus. It localises to the nucleoplasm. It carries out the reaction S-ubiquitinyl-[E2 ubiquitin-conjugating enzyme]-L-cysteine + [acceptor protein]-L-lysine = [E2 ubiquitin-conjugating enzyme]-L-cysteine + N(6)-ubiquitinyl-[acceptor protein]-L-lysine.. It participates in protein modification; protein ubiquitination. Functionally, probable E3 ubiquitin-protein ligase that acts as a regulator of double-strand breaks (DSBs) repair following DNA damage. Functions in a non-canonical fashion to harness RNF168-mediated protein recruitment to DSB-containing chromatin, thereby contributing to regulation of DSB repair pathway utilization. Once recruited to DSB repair sites by recognizing and binding ubiquitin catalyzed by RNF168, competes with TP53BP1 and BRCA1 for association with RNF168-modified chromatin, thereby favouring homologous recombination repair (HRR) and single-strand annealing (SSA) instead of non-homologous end joining (NHEJ) mediated by TP53BP1. E3 ubiquitin-protein ligase activity is not required for regulation of DSBs repair. The chain is E3 ubiquitin-protein ligase RNF169 (RNF169) from Bos taurus (Bovine).